The chain runs to 359 residues: snRNA-activating protein complex subunit 2 (359 aa).

Over residues methionine 1–proline 11 the composition is skewed to basic residues. Disordered stretches follow at residues methionine 1 to threonine 22, asparagine 157 to threonine 221, and threonine 291 to isoleucine 327.

As to quaternary structure, part of the SNAPc complex composed of 5 subunits: SNAPC1, SNAPC2, SNAPC3, SNAPC4 and SNAPC5. SNAPC2 interacts with TBP and SNAPC4.

The protein localises to the nucleus. Functionally, part of the SNAPc complex required for the transcription of both RNA polymerase II and III small-nuclear RNA genes. Binds to the proximal sequence element (PSE), a non-TATA-box basal promoter element common to these 2 types of genes. Recruits TBP and BRF2 to the U6 snRNA TATA box. The protein is snRNA-activating protein complex subunit 2 (Snapc2) of Mus musculus (Mouse).